A 308-amino-acid chain; its full sequence is Formamidopyrimidine-DNA glycosylase (308 aa).

Proline 2 functions as the Schiff-base intermediate with DNA in the catalytic mechanism. Residue glutamate 3 is the Proton donor of the active site. Lysine 61 acts as the Proton donor; for beta-elimination activity in catalysis. The DNA site is built by histidine 100, arginine 120, and arginine 181. Residues 267–301 form an FPG-type zinc finger; it reads AVYGQEGRPCPRCGALVRRDAFMNRSSFSCPVCQP. Arginine 291 (proton donor; for delta-elimination activity) is an active-site residue.

The protein belongs to the FPG family. As to quaternary structure, monomer. The cofactor is Zn(2+).

The catalysed reaction is Hydrolysis of DNA containing ring-opened 7-methylguanine residues, releasing 2,6-diamino-4-hydroxy-5-(N-methyl)formamidopyrimidine.. It catalyses the reaction 2'-deoxyribonucleotide-(2'-deoxyribose 5'-phosphate)-2'-deoxyribonucleotide-DNA = a 3'-end 2'-deoxyribonucleotide-(2,3-dehydro-2,3-deoxyribose 5'-phosphate)-DNA + a 5'-end 5'-phospho-2'-deoxyribonucleoside-DNA + H(+). Functionally, involved in base excision repair of DNA damaged by oxidation or by mutagenic agents. Acts as a DNA glycosylase that recognizes and removes damaged bases. Has a preference for oxidized purines, such as 7,8-dihydro-8-oxoguanine (8-oxoG). Has AP (apurinic/apyrimidinic) lyase activity and introduces nicks in the DNA strand. Cleaves the DNA backbone by beta-delta elimination to generate a single-strand break at the site of the removed base with both 3'- and 5'-phosphates. The sequence is that of Formamidopyrimidine-DNA glycosylase from Kineococcus radiotolerans (strain ATCC BAA-149 / DSM 14245 / SRS30216).